Consider the following 273-residue polypeptide: NCYIFNWGQEGQELLESANPGADFGLKMVLDIDQKEYIPFLQSTAAARIILHQQRSFPFLKDLGIYAMPGTETSIAVLEDQTQHLEAPYSSCTVDGSDIPVANIYSKFNSSYSIQSCLRSCFQEIMVKYCKCAYYLFPLLNGAHYCNNQEDPDWVPCYYNIWDTVSHREQCINMCQQPCNDSNYKMTISMADWPSAAAEDWIFHVLSYEKDTSLDITVNRDGIMRLNIYFEEFNYRSISESPTTNVVWLLSNLGGQFGFWMGGSVLCIIEFGE.

Over 1-245 the chain is Extracellular; it reads NCYIFNWGQE…RSISESPTTN (245 aa). Intrachain disulfides connect cysteine 92/cysteine 179, cysteine 117/cysteine 175, cysteine 121/cysteine 171, cysteine 130/cysteine 157, and cysteine 132/cysteine 146. A helical transmembrane segment spans residues 246–273; it reads VVWLLSNLGGQFGFWMGGSVLCIIEFGE.

Belongs to the amiloride-sensitive sodium channel (TC 1.A.6) family. SCNN1B subfamily. As to quaternary structure, component of the heterotrimeric epithelial sodium channel (ENaC) composed of an alpha/SCNN1A, a beta/SCNN1B and a gamma/SCNN1G subunit.

Its subcellular location is the apical cell membrane. The protein localises to the cytoplasmic vesicle membrane. It catalyses the reaction Na(+)(in) = Na(+)(out). With respect to regulation, originally identified and characterized by its inhibition by the diuretic drug amiloride. This is one of the three pore-forming subunits of the heterotrimeric epithelial sodium channel (ENaC), a critical regulator of sodium balance and fluid homeostasis. ENaC operates in epithelial tissues, where it mediates the electrodiffusion of sodium ions from extracellular fluid through the apical membrane of cells, with water following osmotically. It plays a key role in maintaining sodium homeostasis through electrogenic sodium reabsorption in the kidneys. Additionally, ENaC is essential for airway surface liquid homeostasis, which is crucial for proper mucus clearance. The sequence is that of Epithelial sodium channel subunit beta from Aquarana catesbeiana (American bullfrog).